The following is a 201-amino-acid chain: Superoxide dismutase [Mn] (201 aa).

Mn(2+) is bound by residues His27, His81, Asp163, and His167.

Belongs to the iron/manganese superoxide dismutase family. Homodimer. Mn(2+) serves as cofactor.

It localises to the secreted. It catalyses the reaction 2 superoxide + 2 H(+) = H2O2 + O2. Destroys superoxide anion radicals which are normally produced within the cells and which are toxic to biological systems. The protein is Superoxide dismutase [Mn] (sodA) of Streptococcus pyogenes serotype M1.